Reading from the N-terminus, the 457-residue chain is Prenyltransferase ucdE (457 aa).

Positions 106, 198, 277, 279, 382, 447, and 451 each coordinate dimethylallyl diphosphate.

This sequence belongs to the tryptophan dimethylallyltransferase family.

It participates in secondary metabolite biosynthesis. Its function is as follows. Nonribosomal peptide synthetase that mediates the biosynthesis of usterphenyllins and uscandidusins, p-terphenyl derivatives. Within the pathway, ucdE prenylates position C-5 of ring A of 3,15-dihydroxyterphenyllin to produce forms usterphenyllin B. UcdE further prenylates position C-14 of ring C of usterphenyllin B to form usterphenyllin A. The pathway begin with the biosynthesis of 4-hydroxyphenylpyruvate (HPPA) from L-tyrosine, possibly by the aminotransferase ucdG. The nonribosomal peptide synthetase ucdA then condenses two HPPA units to produce atromentin. The key step in this pathway is the reduction and dehydration of atromentin to form a terphenyl triol intermediate, performed by the NAD-dependent dehydrogenase ucdB. Further O-methylation by the methyltransferase ucdC forms terphenyllin carrying two methoxy moieties at C-9 and C-12, and subsequent dihydroxylation at C-3 of ring A and C-15 of ring C by the flavin-dependent oxygenase ucdD leads to 3,15-dihydroxyterphenyllin. Prenylation by ucdE at position C-5 of ring A forms usterphenyllin B, and is followed by a second prenylation at position C-14 of ring C to form usterphenyllin A. The following furan ring formation that leads to uscandidusins A and B was proven to be an unexpected spontaneous non-enzymatic reaction. The sequence is that of Prenyltransferase ucdE from Aspergillus ustus.